The primary structure comprises 365 residues: Histidinol-phosphate aminotransferase (365 aa).

Positions 1–22 are disordered; sequence MSRPVPNPGILDIAPYTPGKSP. At Lys-221 the chain carries N6-(pyridoxal phosphate)lysine.

Belongs to the class-II pyridoxal-phosphate-dependent aminotransferase family. Histidinol-phosphate aminotransferase subfamily. In terms of assembly, homodimer. Pyridoxal 5'-phosphate serves as cofactor.

The catalysed reaction is L-histidinol phosphate + 2-oxoglutarate = 3-(imidazol-4-yl)-2-oxopropyl phosphate + L-glutamate. The protein operates within amino-acid biosynthesis; L-histidine biosynthesis; L-histidine from 5-phospho-alpha-D-ribose 1-diphosphate: step 7/9. The protein is Histidinol-phosphate aminotransferase of Rhodopseudomonas palustris (strain BisB5).